Here is a 466-residue protein sequence, read N- to C-terminus: Glycylpeptide N-tetradecanoyltransferase (466 aa).

The interval 1–21 (MDNENNKNTKNSQQDSSFSEG) is disordered. Positions 8–19 (NTKNSQQDSSFS) are enriched in polar residues. Position 17 is a phosphoserine (Ser-17). Tetradecanoyl-CoA contacts are provided by residues 51–54 (FKFW), 185–187 (LCI), and 193–197 (SKRLT). Catalysis depends on Ile-466, which acts as the Proton acceptor; via carboxylate.

This sequence belongs to the NMT family. In terms of assembly, monomer.

Its subcellular location is the cytoplasm. The catalysed reaction is N-terminal glycyl-[protein] + tetradecanoyl-CoA = N-tetradecanoylglycyl-[protein] + CoA + H(+). Adds a myristoyl group to the N-terminal glycine residue of certain cellular proteins. The chain is Glycylpeptide N-tetradecanoyltransferase (nmt1) from Schizosaccharomyces pombe (strain 972 / ATCC 24843) (Fission yeast).